The following is a 373-amino-acid chain: tRNA (guanine(26)-N(2))-dimethyltransferase (373 aa).

A Trm1 methyltransferase domain is found at 2–365 (KIISEGETKL…AELSDLVVLI (364 aa)). Residues Arg-35, Arg-66, Asp-86, Asp-113, and Ala-114 each contribute to the S-adenosyl-L-methionine site.

Belongs to the class I-like SAM-binding methyltransferase superfamily. Trm1 family.

The catalysed reaction is guanosine(26) in tRNA + 2 S-adenosyl-L-methionine = N(2)-dimethylguanosine(26) in tRNA + 2 S-adenosyl-L-homocysteine + 2 H(+). Its function is as follows. Dimethylates a single guanine residue at position 26 of a number of tRNAs using S-adenosyl-L-methionine as donor of the methyl groups. This Methanococcus maripaludis (strain C6 / ATCC BAA-1332) protein is tRNA (guanine(26)-N(2))-dimethyltransferase.